Reading from the N-terminus, the 360-residue chain is Histidinol-phosphate aminotransferase (360 aa).

Lys-208 is modified (N6-(pyridoxal phosphate)lysine).

The protein belongs to the class-II pyridoxal-phosphate-dependent aminotransferase family. Histidinol-phosphate aminotransferase subfamily. In terms of assembly, homodimer. Requires pyridoxal 5'-phosphate as cofactor.

The catalysed reaction is L-histidinol phosphate + 2-oxoglutarate = 3-(imidazol-4-yl)-2-oxopropyl phosphate + L-glutamate. Its pathway is amino-acid biosynthesis; L-histidine biosynthesis; L-histidine from 5-phospho-alpha-D-ribose 1-diphosphate: step 7/9. This is Histidinol-phosphate aminotransferase (hisC) from Lactococcus lactis subsp. lactis (strain IL1403) (Streptococcus lactis).